Here is a 550-residue protein sequence, read N- to C-terminus: Zinc finger protein 382 (550 aa).

The tract at residues Met1–Asn105 is mediates interaction with TRIM28. Represses transcription regions lie at residues Gly5–Val46 and Ile70–Pro211. In terms of domain architecture, KRAB spans Val7–Glu78. The C2H2-type 1; degenerate zinc finger occupies Phe212–His234. 9 consecutive C2H2-type zinc fingers follow at residues Phe296–His318, Tyr324–His346, Phe352–His374, Tyr380–His402, Tyr408–His430, Tyr436–His458, Tyr464–His486, Asn492–His514, and Tyr520–His542. Residues Phe296–Gln550 are required for transcriptional repression activity; probably mediates sequence-specific DNA-binding.

Belongs to the krueppel C2H2-type zinc-finger protein family. As to quaternary structure, interacts with TRIM28; enhances the transcriptional repressor activity. In terms of tissue distribution, specifically expressed in heart with a weaker expression also detected in skeletal muscle.

The protein localises to the nucleus. In terms of biological role, functions as a sequence-specific transcriptional repressor. This chain is Zinc finger protein 382 (ZNF382), found in Homo sapiens (Human).